Reading from the N-terminus, the 236-residue chain is Purine nucleoside phosphorylase DeoD-type (236 aa).

Position 5 (His5) interacts with a purine D-ribonucleoside. Phosphate-binding positions include Gly21, Arg25, Arg44, and 88–91; that span reads RVGT. Residues 180 to 182 and 204 to 205 each bind a purine D-ribonucleoside; these read DME and SD. Residue Asp205 is the Proton donor of the active site.

Belongs to the PNP/UDP phosphorylase family. In terms of assembly, homohexamer; trimer of homodimers.

The enzyme catalyses a purine D-ribonucleoside + phosphate = a purine nucleobase + alpha-D-ribose 1-phosphate. It catalyses the reaction a purine 2'-deoxy-D-ribonucleoside + phosphate = a purine nucleobase + 2-deoxy-alpha-D-ribose 1-phosphate. Catalyzes the reversible phosphorolytic breakdown of the N-glycosidic bond in the beta-(deoxy)ribonucleoside molecules, with the formation of the corresponding free purine bases and pentose-1-phosphate. This chain is Purine nucleoside phosphorylase DeoD-type, found in Buchnera aphidicola subsp. Schizaphis graminum (strain Sg).